A 368-amino-acid chain; its full sequence is Glutamate 5-kinase 1 (368 aa).

Residue Lys12 coordinates ATP. Positions 52, 135, and 147 each coordinate substrate. Residues 167–168 and 209–215 each bind ATP; these read SD and TGGMKTK. The PUA domain maps to 274–348; it reads QGEVVVDGSF…DNEQSEFSEK (75 aa).

It belongs to the glutamate 5-kinase family.

It localises to the cytoplasm. The enzyme catalyses L-glutamate + ATP = L-glutamyl 5-phosphate + ADP. Its pathway is amino-acid biosynthesis; L-proline biosynthesis; L-glutamate 5-semialdehyde from L-glutamate: step 1/2. Catalyzes the transfer of a phosphate group to glutamate to form L-glutamate 5-phosphate. This Pseudoalteromonas translucida (strain TAC 125) protein is Glutamate 5-kinase 1.